Here is a 146-residue protein sequence, read N- to C-terminus: UPF0742 protein C1348.03 (146 aa).

The helical transmembrane segment at Leu-38–Ser-60 threads the bilayer.

This sequence belongs to the UPF0742 family.

The protein resides in the cytoplasm. It localises to the nucleus membrane. The protein is UPF0742 protein C1348.03 of Schizosaccharomyces pombe (strain 972 / ATCC 24843) (Fission yeast).